A 396-amino-acid polypeptide reads, in one-letter code: NADH-quinone oxidoreductase subunit D (396 aa).

Belongs to the complex I 49 kDa subunit family. NDH-1 is composed of 14 different subunits. Subunits NuoB, C, D, E, F, and G constitute the peripheral sector of the complex.

The protein localises to the cell inner membrane. It carries out the reaction a quinone + NADH + 5 H(+)(in) = a quinol + NAD(+) + 4 H(+)(out). Functionally, NDH-1 shuttles electrons from NADH, via FMN and iron-sulfur (Fe-S) centers, to quinones in the respiratory chain. The immediate electron acceptor for the enzyme in this species is believed to be ubiquinone. Couples the redox reaction to proton translocation (for every two electrons transferred, four hydrogen ions are translocated across the cytoplasmic membrane), and thus conserves the redox energy in a proton gradient. The protein is NADH-quinone oxidoreductase subunit D of Agrobacterium fabrum (strain C58 / ATCC 33970) (Agrobacterium tumefaciens (strain C58)).